A 464-amino-acid chain; its full sequence is Glutamate--tRNA ligase 1 (464 aa).

Positions 10 to 20 match the 'HIGH' region motif; the sequence is PSPTGYLHIGG. The short motif at 238–242 is the 'KMSKS' region element; sequence KLSKR. Lysine 241 lines the ATP pocket.

The protein belongs to the class-I aminoacyl-tRNA synthetase family. Glutamate--tRNA ligase type 1 subfamily. In terms of assembly, monomer.

It localises to the cytoplasm. The catalysed reaction is tRNA(Glu) + L-glutamate + ATP = L-glutamyl-tRNA(Glu) + AMP + diphosphate. In terms of biological role, catalyzes the attachment of glutamate to tRNA(Glu) in a two-step reaction: glutamate is first activated by ATP to form Glu-AMP and then transferred to the acceptor end of tRNA(Glu). The protein is Glutamate--tRNA ligase 1 of Helicobacter hepaticus (strain ATCC 51449 / 3B1).